The sequence spans 617 residues: V-type proton ATPase catalytic subunit A (617 aa).

Asp-2 is subject to N-acetylalanine. Residue Thr-136 is modified to Phosphothreonine. 250 to 257 (GAFGCGKT) serves as a coordination point for ATP. A Phosphoserine; by AMPK modification is found at Ser-384.

The protein belongs to the ATPase alpha/beta chains family. In terms of assembly, V-ATPase is a heteromultimeric enzyme made up of two complexes: the ATP-hydrolytic V1 complex and the proton translocation V0 complex. The V1 complex consists of three catalytic AB heterodimers that form a heterohexamer, three peripheral stalks each consisting of EG heterodimers, one central rotor including subunits D and F, and the regulatory subunits C and H. The proton translocation complex V0 consists of the proton transport subunit a, a ring of proteolipid subunits c9c'', rotary subunit d, subunits e and f, and the accessory subunits ATP6AP1/Ac45 and ATP6AP2/PRR. Interacts with the V0 complex V-ATPase subunit a4 ATP6V0A4. Interacts with WFS1. Interacts with alpha-crystallin B chain/CRYAB and with MTOR, forming a ternary complex. As to quaternary structure, (Microbial infection) Interacts with Rabies virus protein M; this interaction promotes virion uncoating. In terms of processing, phosphorylation at Ser-384 by AMPK down-regulates its enzyme activity. High expression in the skin.

It is found in the cytoplasm. Its subcellular location is the cytosol. The protein resides in the cytoplasmic vesicle. It localises to the secretory vesicle. The protein localises to the clathrin-coated vesicle membrane. It is found in the lysosome. It catalyses the reaction ATP + H2O + 4 H(+)(in) = ADP + phosphate + 5 H(+)(out). Its activity is regulated as follows. ATP hydrolysis occurs at the interface between the nucleotide-binding domains of subunits A and B. ATP hydrolysis triggers a conformational change in the subunits D and F, which induces a shift of subunit d. The c-ring is subsequently rotated and results in a continuous proton translocation across the membrane. Catalytic subunit of the V1 complex of vacuolar(H+)-ATPase (V-ATPase), a multisubunit enzyme composed of a peripheral complex (V1) that hydrolyzes ATP and a membrane integral complex (V0) that translocates protons. V-ATPase is responsible for acidifying and maintaining the pH of intracellular compartments and in some cell types, is targeted to the plasma membrane, where it is responsible for acidifying the extracellular environment. In aerobic conditions, involved in intracellular iron homeostasis, thus triggering the activity of Fe(2+) prolyl hydroxylase (PHD) enzymes, and leading to HIF1A hydroxylation and subsequent proteasomal degradation. May play a role in neurite development and synaptic connectivity. Functionally, (Microbial infection) Plays an important role in virion uncoating during Rabies virus replication after membrane fusion. Specifically, participates in the dissociation of incoming viral matrix M proteins uncoating through direct interaction. This chain is V-type proton ATPase catalytic subunit A (ATP6V1A), found in Homo sapiens (Human).